The primary structure comprises 248 residues: uncharacterized protein (248 aa).

Residues 104-122 (CDVAACVGATWIAGGFAGA) form a helical membrane-spanning segment.

It localises to the membrane. This is an uncharacterized protein from Escherichia coli (strain K12).